Here is a 119-residue protein sequence, read N- to C-terminus: ATP-dependent Clp protease adapter protein ClpS (119 aa).

The disordered stretch occupies residues 1-24 (MGPESPDSIPPHGPGNGDGDQDLD).

This sequence belongs to the ClpS family. As to quaternary structure, binds to the N-terminal domain of the chaperone ClpA.

Involved in the modulation of the specificity of the ClpAP-mediated ATP-dependent protein degradation. The chain is ATP-dependent Clp protease adapter protein ClpS from Gluconobacter oxydans (strain 621H) (Gluconobacter suboxydans).